We begin with the raw amino-acid sequence, 98 residues long: Putative septation protein SpoVG (98 aa).

It belongs to the SpoVG family.

Functionally, could be involved in septation. The polypeptide is Putative septation protein SpoVG (Alkaliphilus metalliredigens (strain QYMF)).